Here is a 243-residue protein sequence, read N- to C-terminus: Probable transcriptional regulatory protein BB_0025 (243 aa).

Belongs to the TACO1 family.

It localises to the cytoplasm. This is Probable transcriptional regulatory protein BB_0025 from Borreliella burgdorferi (strain ATCC 35210 / DSM 4680 / CIP 102532 / B31) (Borrelia burgdorferi).